A 326-amino-acid polypeptide reads, in one-letter code: Negative regulator of the PHO system (326 aa).

The region spanning 8–290 is the Protein kinase domain; the sequence is FQQLEKLGEG…ARQALQHPWF (283 aa). ATP-binding positions include 14 to 22 and lysine 37; that span reads LGEGTYATV. Aspartate 131 functions as the Proton acceptor in the catalytic mechanism. Positions 300–326 are disordered; the sequence is PQHLSDPYQQQQQQQQHPHQPIIDQQY. A compositionally biased stretch (low complexity) spans 305–326; it reads DPYQQQQQQQQHPHQPIIDQQY.

The protein belongs to the protein kinase superfamily. CMGC Ser/Thr protein kinase family. CDC2/CDKX subfamily. As to quaternary structure, interacts with a number of cyclins.

The enzyme catalyses L-seryl-[protein] + ATP = O-phospho-L-seryl-[protein] + ADP + H(+). It carries out the reaction L-threonyl-[protein] + ATP = O-phospho-L-threonyl-[protein] + ADP + H(+). Its function is as follows. When phosphate concentrations are high it phosphorylates the PHO4 transcription factor thus establishing repression. This Candida albicans (Yeast) protein is Negative regulator of the PHO system (PHO85).